The chain runs to 62 residues: Large ribosomal subunit protein bL28 (62 aa).

The protein belongs to the bacterial ribosomal protein bL28 family.

The polypeptide is Large ribosomal subunit protein bL28 (Streptococcus equi subsp. equi (strain 4047)).